A 541-amino-acid chain; its full sequence is Atlastin-3 (541 aa).

Residues 1 to 22 (MLSPQRTAAVASRGAGDAMENG) are disordered. Positions 1-25 (MLSPQRTAAVASRGAGDAMENGKPG) are N-terminal hypervariable region (HVR). The Cytoplasmic portion of the chain corresponds to 1 to 445 (MLSPQRTAAV…NVFSTFRTPA (445 aa)). A GB1/RHD3-type G domain is found at 57 to 305 (DLDVVVVSVA…LIPYVLNPSK (249 aa)). Positions 70, 71, 72, 73, 74, 75, and 109 each coordinate GDP. D142 is a Mg(2+) binding site. Positions 213, 214, 272, and 275 each coordinate GDP. Residues 343 to 434 (MLQATAEANN…YENFCKHNGS (92 aa)) are 3HB (three-helix bundle) domain. K391 carries the N6-acetyllysine modification. A helical membrane pass occupies residues 446–466 (VLFTGIAALYIASGFTGFIGL). Residue E467 is a topological domain, lumenal. Residues 468 to 488 (VVAQLFNCMVGLLLIALLTWG) traverse the membrane as a helical segment. Topologically, residues 489–541 (YIRYSGQYRELGGAIDSGAAYVLEQASSHIGNSTQAAVRDAVVGRPPADKKSQ) are cytoplasmic.

The protein belongs to the TRAFAC class dynamin-like GTPase superfamily. GB1/RHD3 GTPase family. GB1 subfamily. Monomeric and homodimeric. The homodimer, transiently formed by two molecules on opposing membranes, is the active form mediating ER membrane fusion. Interacts with ZFYVE27; both proteins are involved in endoplasmic reticulum tubular network organization. Interacts with REEP5; both proteins are involved in endoplasmic reticulum tubular network organization. As to expression, expressed in cardiomyocytes (at protein level).

The protein resides in the endoplasmic reticulum membrane. It catalyses the reaction GTP + H2O = GDP + phosphate + H(+). Atlastin-3 (ATL3) is a membrane-anchored GTPase that mediates the GTP-dependent fusion of endoplasmic reticulum (ER) membranes, maintaining the continuous ER network. It facilitates the formation of three-way junctions where ER tubules intersect. Two atlastin-3 on neighboring ER tubules bind GTP and form loose homodimers through the GB1/RHD3-type G domains and 3HB regions. Upon GTP hydrolysis, the 3HB regions tighten, pulling the membranes together to drive their fusion. After fusion, the homodimer disassembles upon release of inorganic phosphate (Pi). Subsequently, GDP dissociates, resetting the monomers to a conformation ready for a new fusion cycle. The sequence is that of Atlastin-3 from Mus musculus (Mouse).